Consider the following 142-residue polypeptide: Ovocleidin-17 (142 aa).

3 disulfides stabilise this stretch: C5-C16, C33-C138, and C113-C130. Residues 12 to 139 enclose the C-type lectin domain; sequence TPGGCLGFFS…CTERNAFVCK (128 aa). The N-linked (GlcNAc...) asparagine glycan is linked to N59. Phosphoserine occurs at positions 61 and 67.

In terms of tissue distribution, expressed in the shell gland mucosa. Not detected in hen liver, magnum, isthmus, cartilage, bone or in egg white or yolk.

The protein resides in the secreted. It localises to the extracellular space. Its subcellular location is the extracellular matrix. Functionally, may form proteinaceous networks during the construction of the eggshell which then may control the deposition of the mineral phase. This Gallus gallus (Chicken) protein is Ovocleidin-17.